We begin with the raw amino-acid sequence, 101 residues long: uncharacterized protein (101 aa).

The helical transmembrane segment at 72-94 threads the bilayer; that stretch reads ILCPSFLNYSFINIYCFGPYTMV.

It localises to the membrane. This is an uncharacterized protein from Schizosaccharomyces pombe (strain 972 / ATCC 24843) (Fission yeast).